Reading from the N-terminus, the 176-residue chain is NAD(P)H-quinone oxidoreductase subunit 6, chloroplastic (176 aa).

Transmembrane regions (helical) follow at residues 10 to 30 (FLLV…VLLT), 32 to 52 (PIYS…FYIL), 61 to 81 (AQLL…VMFM), 92 to 112 (LWTL…LSLI), and 152 to 172 (FFLP…GAIA).

It belongs to the complex I subunit 6 family. As to quaternary structure, NDH is composed of at least 16 different subunits, 5 of which are encoded in the nucleus.

It localises to the plastid. The protein resides in the chloroplast thylakoid membrane. It carries out the reaction a plastoquinone + NADH + (n+1) H(+)(in) = a plastoquinol + NAD(+) + n H(+)(out). The enzyme catalyses a plastoquinone + NADPH + (n+1) H(+)(in) = a plastoquinol + NADP(+) + n H(+)(out). NDH shuttles electrons from NAD(P)H:plastoquinone, via FMN and iron-sulfur (Fe-S) centers, to quinones in the photosynthetic chain and possibly in a chloroplast respiratory chain. The immediate electron acceptor for the enzyme in this species is believed to be plastoquinone. Couples the redox reaction to proton translocation, and thus conserves the redox energy in a proton gradient. The protein is NAD(P)H-quinone oxidoreductase subunit 6, chloroplastic (ndhG) of Pelargonium hortorum (Common geranium).